The sequence spans 1007 residues: Serine/threonine-protein kinase PRP4 homolog (1007 aa).

The segment at 1–104 (MAATEPPSLR…PAKRTKLDDL (104 aa)) is disordered. Ala2 is subject to N-acetylalanine. Phosphoserine occurs at positions 8, 21, 24, and 33. Composition is skewed to basic residues over residues 40–60 (KHSR…KHKH) and 68–82 (KKHK…HKRK). Basic and acidic residues predominate over residues 83 to 92 (EVLDASDKEG). A phosphoserine mark is found at Ser88 and Ser94. Position 100 is an N6-acetyllysine; alternate (Lys100). Lys100 participates in a covalent cross-link: Glycyl lysine isopeptide (Lys-Gly) (interchain with G-Cter in SUMO2); alternate. Residue Lys112 forms a Glycyl lysine isopeptide (Lys-Gly) (interchain with G-Cter in SUMO2) linkage. A Glycyl lysine isopeptide (Lys-Gly) (interchain with G-Cter in SUMO2); alternate cross-link involves residue Lys118. Residue Lys118 forms a Glycyl lysine isopeptide (Lys-Gly) (interchain with G-Cter in SUMO1); alternate linkage. Ser132 carries the phosphoserine modification. A Phosphotyrosine modification is found at Tyr141. Disordered stretches follow at residues 141–535 (YESG…EDEE) and 560–583 (NISV…SPDD). A phosphoserine mark is found at Ser143, Ser145, and Ser167. The segment covering 158–169 (GNRSSTRSSSTR) has biased composition (low complexity). Glycyl lysine isopeptide (Lys-Gly) (interchain with G-Cter in SUMO2) cross-links involve residues Lys171 and Lys178. Composition is skewed to basic residues over residues 180-203 (SAKK…RKSK) and 215-231 (RSKS…SKRS). Residues Ser240, Ser242, Ser258, Ser278, Ser292, and Ser294 each carry the phosphoserine modification. Positions 248–271 (RSQEKVGKARSPADEKIKSEEKGK) are enriched in basic and acidic residues. Residues 294-303 (SPVDLRDKSK) are compositionally biased toward basic and acidic residues. Over residues 304–315 (DRRSRSKERKSK) the composition is skewed to basic residues. Over residues 316 to 325 (RSEIDKEKKP) the composition is skewed to basic and acidic residues. A phosphoserine mark is found at Ser328, Ser354, Ser356, Ser366, and Ser368. Positions 342–367 (PSRRPGRSPKRRSLSPKQRDKSRRSR) are enriched in basic residues. Phosphothreonine is present on Thr385. Ser387 is modified (phosphoserine). 2 stretches are compositionally biased toward basic and acidic residues: residues 395–408 (RSLE…ERRR) and 415–429 (RPRD…RSKD). 3 positions are modified to phosphoserine: Ser427, Ser431, and Ser437. Residues 438-497 (PSRRRSRSPIRRRSRSPLRRSRSPRRRSRSPRRRDRSRRSRSRLRRRSRSRGGHRRRSRS) are compositionally biased toward basic residues. 8 positions are modified to phosphoserine: Ser518, Ser519, Ser520, Ser565, Ser569, Ser576, Ser578, and Ser580. A compositionally biased stretch (acidic residues) spans 518 to 535 (SSSDDNLEDFDVEEEDEE). The segment covering 562-581 (SVPSEPSSPQSSTRSRSPSP) has biased composition (low complexity). Glycyl lysine isopeptide (Lys-Gly) (interchain with G-Cter in SUMO2) cross-links involve residues Lys593 and Lys659. Residues 687 to 1003 (YNVYGYTGQG…INQALQHAFI (317 aa)) enclose the Protein kinase domain. ATP is bound by residues 693–701 (TGQGVFSNV) and Lys717. Lys717 carries the N6-acetyllysine modification. Asp815 functions as the Proton acceptor in the catalytic mechanism. Position 849 is a phosphotyrosine (Tyr849). Ser852 carries the phosphoserine modification.

Belongs to the protein kinase superfamily. CMGC Ser/Thr protein kinase family. Interacts with CLK1 C-terminus. Associates with the U5 snRNP and NCOR1 deacetylase complexes. Identified in the spliceosome C complex. In terms of processing, phosphorylated by CLK1. Autophosphorylated; phosphorylation inhibits interaction with its targets, such as PRPF6 or SMARCA4.

The protein localises to the nucleus. It is found in the chromosome. It localises to the centromere. The protein resides in the kinetochore. The catalysed reaction is L-seryl-[protein] + ATP = O-phospho-L-seryl-[protein] + ADP + H(+). The enzyme catalyses L-threonyl-[protein] + ATP = O-phospho-L-threonyl-[protein] + ADP + H(+). In terms of biological role, serine/threonine kinase involved in spliceosomal assembly as well as mitosis and signaling regulation. Connects chromatin mediated regulation of transcription and pre-mRNA splicing. During spliceosomal assembly, interacts with and phosphorylates PRPF6 and PRPF31, components of the U4/U6-U5 tri-small nuclear ribonucleoprotein (snRNP), to facilitate the formation of the spliceosome B complex. Plays a role in regulating transcription and the spindle assembly checkpoint (SAC). Associates with U5 snRNP and NCOR1 deacetylase complexes which may allow a coordination of pre-mRNA splicing with chromatin remodeling events involved in transcriptional regulation. Associates and probably phosphorylates SMARCA4 and NCOR1. Phosphorylates SRSF1. Associates with kinetochores during mitosis and is necessary for recruitment and maintenance of the checkpoint proteins such as MAD1L1 and MAD12L1 at the kinetochores. Phosphorylates and regulates the activity of the transcription factors such as ELK1 and KLF13. Phosphorylates nuclear YAP1 and WWTR1/TAZ which induces nuclear exclusion and regulates Hippo signaling pathway, involved in tissue growth control. This is Serine/threonine-protein kinase PRP4 homolog (Prp4k) from Rattus norvegicus (Rat).